The following is a 652-amino-acid chain: Carboxypeptidase Z (652 aa).

The first 18 residues, 1–18 (MPPPLPLLLLTVLVVAAA), serve as a signal peptide directing secretion. Residues 27 to 160 (NPAGECHRPP…TREDEGCYDP (134 aa)) form the FZ domain. 5 cysteine pairs are disulfide-bonded: C43-C109, C51-C102, C93-C129, C118-C157, and C122-C146. Positions 186 to 502 (SHHSYAQMVR…ESLLNFVETV (317 aa)) constitute a Peptidase M14 domain. The Zn(2+) site is built by H248 and E251. N281 carries N-linked (GlcNAc...) asparagine glycosylation. H380 is a Zn(2+) binding site. The Proton donor/acceptor role is filled by E472. Positions 595 to 629 (LRRTGPHDPLGGASSLGEATEPDPLRARRQPSADG) are disordered.

The protein belongs to the peptidase M14 family. It depends on Zn(2+) as a cofactor. In placenta, it is present within invasive trophoblasts and in the surrounding extracellular space. Also present in amnion cells, but is not readily apparent in the extracellular matrix of this cell type. Present in normal pituitary gland and neoplastic pituitary gland (especially POMC-, GH- and PRL-producing adenomas) (at protein level). Widely expressed.

It localises to the secreted. The protein localises to the extracellular space. It is found in the extracellular matrix. Inhibited by 2-mercaptomethyl-3-guanidinoethylthiopropanoic acid (MGTA) and guanidinoethylmercaptosuccinic acid (GEMSA). Inhibited by chelating agents such as EDTA and EGTA. In terms of biological role, cleaves substrates with C-terminal arginine residues. Probably modulates the Wnt signaling pathway, by cleaving some undefined protein. May play a role in cleavage during prohormone processing. The sequence is that of Carboxypeptidase Z (CPZ) from Homo sapiens (Human).